Here is a 110-residue protein sequence, read N- to C-terminus: MDITNANSVVSLMNSVLAPSSKVGSLDGSAGDNAKVSIDFGAVLKSSLDKVDASQQKAETLSRSFELGNNDVDLHDVMLSLQKANIDLQTAVQVRNKLVSAYQNIMSMSI.

This sequence belongs to the FliE family.

It is found in the bacterial flagellum basal body. The chain is Flagellar hook-basal body complex protein FliE from Ralstonia nicotianae (strain ATCC BAA-1114 / GMI1000) (Ralstonia solanacearum).